The chain runs to 118 residues: Small ribosomal subunit protein uS13 (118 aa).

The disordered stretch occupies residues 93–118 (KGLPVRGQRTKTNARTRKGPRKPIRK).

Belongs to the universal ribosomal protein uS13 family. As to quaternary structure, part of the 30S ribosomal subunit. Forms a loose heterodimer with protein S19. Forms two bridges to the 50S subunit in the 70S ribosome.

Located at the top of the head of the 30S subunit, it contacts several helices of the 16S rRNA. In the 70S ribosome it contacts the 23S rRNA (bridge B1a) and protein L5 of the 50S subunit (bridge B1b), connecting the 2 subunits; these bridges are implicated in subunit movement. Contacts the tRNAs in the A and P-sites. The protein is Small ribosomal subunit protein uS13 of Ectopseudomonas mendocina (strain ymp) (Pseudomonas mendocina).